Here is a 114-residue protein sequence, read N- to C-terminus: Putative pterin-4-alpha-carbinolamine dehydratase (114 aa).

The protein belongs to the pterin-4-alpha-carbinolamine dehydratase family.

The catalysed reaction is (4aS,6R)-4a-hydroxy-L-erythro-5,6,7,8-tetrahydrobiopterin = (6R)-L-erythro-6,7-dihydrobiopterin + H2O. This Pseudoalteromonas translucida (strain TAC 125) protein is Putative pterin-4-alpha-carbinolamine dehydratase.